Consider the following 1383-residue polypeptide: Palladin (1383 aa).

Disordered stretches follow at residues 1–22 (MSGT…EESK), 52–169 (DSET…SQLC), and 183–238 (FKAA…KSPG). Over residues 78–96 (HPSHKETKLGEHASRRPQD) the composition is skewed to basic and acidic residues. Over residues 191-201 (RSPNGESSSPD) the composition is skewed to polar residues. Position 192 is a phosphoserine (Ser-192). A compositionally biased stretch (low complexity) spans 210 to 223 (QPSALLSASASQSP). The region spanning 271–360 (PRFIQKLRSQ…GSDTTSAEVF (90 aa)) is the Ig-like C2-type 1 domain. A disulfide bridge links Cys-292 with Cys-344. Ser-401 carries the phosphoserine modification. The Ig-like C2-type 2 domain occupies 440-539 (PPVFTKELQN…ATSTAQLVVT (100 aa)). Cys-462 and Cys-521 are joined by a disulfide. Residues 562–566 (FPPPP) are interaction with VASP. Disordered regions lie at residues 609–653 (ETNG…LAKP), 673–728 (AGAR…SSGS), and 740–846 (AQNL…RFGH). Ser-632 carries the phosphoserine modification. Position 635 is a phosphothreonine (Thr-635). The residue at position 641 (Ser-641) is a Phosphoserine. The interaction with LASP1 stretch occupies residues 646–676 (PPPLLAKPKLDPLKLQQLQNQIRLEQEAGAR). The tract at residues 676–696 (RQPPPAPRSAPPSPPFPPPPA) is interaction with SORBS2, SPIN90 and SRC. Positions 677 to 697 (QPPPAPRSAPPSPPFPPPPAF) are enriched in pro residues. Residues Ser-684, Ser-688, and Ser-728 each carry the phosphoserine modification. Over residues 745-763 (PASGHGTPASSPSSSSLPS) the composition is skewed to low complexity. The segment at 766-831 (SPTPRQFGRA…PPPPPPLPSP (66 aa)) is interaction with EPS8. The tract at residues 796-831 (SPSPPPPPPPVFSPTAAFPVPDVFPLPPPPPPLPSP) is interaction with SORBS2, SPIN90, SRC and PFN1. Composition is skewed to pro residues over residues 797–807 (PSPPPPPPPVF) and 817–830 (DVFP…PLPS). The interaction with VASP stretch occupies residues 819-823 (FPLPP). Polar residues predominate over residues 832–846 (GQASHCSSPATRFGH). The interaction with ACTN stretch occupies residues 833–890 (QASHCSSPATRFGHSQTPAAFLSALLPSQPPPAAVNALGLPKGVTPAGFPKKASRTAR). A phosphoserine mark is found at Ser-893, Ser-979, and Ser-984. An Ig-like C2-type 3 domain is found at 1001–1085 (PFFEMKLKHY…MAANPQGRIS (85 aa)). Residues 1096–1125 (NQRGRSPRSPSGHPHVRRPRSRSRDSGDEN) are disordered. Residues 1098–1108 (RGRSPRSPSGH) show a composition bias toward low complexity. Residues Ser-1101, Ser-1104, Ser-1106, and Ser-1116 each carry the phosphoserine modification. Phosphoserine; by PKB/AKT1 is present on Ser-1118. Ser-1121 bears the Phosphoserine mark. Ig-like C2-type domains follow at residues 1135–1226 (PHFL…LVVA) and 1233–1324 (PPVF…ARLD). Interaction with EZR stretches follow at residues 1137 to 1226 (FLQA…LVVA) and 1236 to 1326 (FIEK…LDVY). Cys-1156 and Cys-1208 form a disulfide bridge. Position 1352 is a phosphoserine (Ser-1352).

This sequence belongs to the myotilin/palladin family. In terms of assembly, interacts with EPS8. Interacts with LASP1. Interacts with VASP. Interacts with ACTN. Interacts with SORBS2. Interacts with PFN1. Interacts with LPP. Interacts with SPIN90. Interacts with SRC. Interacts with EZR. Interacts with RAI14. Post-translationally, phosphorylated predominantly on serines and, to a lesser extent, on tyrosines. Phosphorylation at Ser-1118 by PKB/AKT1 modulates cytoskeletal organization and cell motility. As to expression, detected in both muscle and non-muscle tissues. High expression in prostate, ovary, colon, and kidney. Not detected in spleen, skeletal muscle, lung and peripheral blood lymphocytes (at protein level). Protein is overexpressed in FA6, HPAF, IMIM-PC2, SUIT-2 and PancTu-II sporadic pancreatic cancer cell lines.

The protein resides in the cytoplasm. It is found in the cytoskeleton. Its subcellular location is the cell junction. It localises to the focal adhesion. The protein localises to the myofibril. The protein resides in the sarcomere. It is found in the z line. Its subcellular location is the cell projection. It localises to the ruffle. The protein localises to the podosome. The protein resides in the lamellipodium. It is found in the axon. Its subcellular location is the growth cone. Functionally, cytoskeletal protein required for organization of normal actin cytoskeleton. Roles in establishing cell morphology, motility, cell adhesion and cell-extracellular matrix interactions in a variety of cell types. May function as a scaffolding molecule with the potential to influence both actin polymerization and the assembly of existing actin filaments into higher-order arrays. Binds to proteins that bind to either monomeric or filamentous actin. Localizes at sites where active actin remodeling takes place, such as lamellipodia and membrane ruffles. Different isoforms may have functional differences. Involved in the control of morphological and cytoskeletal changes associated with dendritic cell maturation. Involved in targeting ACTN to specific subcellular foci. In Homo sapiens (Human), this protein is Palladin (PALLD).